A 398-amino-acid chain; its full sequence is 1-deoxy-D-xylulose 5-phosphate reductoisomerase (398 aa).

NADPH-binding residues include Thr10, Gly11, Ser12, Ile13, Gly36, Lys37, Asn38, and Asn124. 1-deoxy-D-xylulose 5-phosphate is bound at residue Lys125. Residue Glu126 coordinates NADPH. Residue Asp150 coordinates Mn(2+). 1-deoxy-D-xylulose 5-phosphate is bound by residues Ser151, Glu152, Ser186, and His209. Residue Glu152 coordinates Mn(2+). Gly215 provides a ligand contact to NADPH. Positions 222, 227, 228, and 231 each coordinate 1-deoxy-D-xylulose 5-phosphate. Glu231 serves as a coordination point for Mn(2+).

This sequence belongs to the DXR family. In terms of assembly, homodimer. Requires Mg(2+) as cofactor. Mn(2+) is required as a cofactor. The cofactor is Co(2+).

The enzyme catalyses 2-C-methyl-D-erythritol 4-phosphate + NADP(+) = 1-deoxy-D-xylulose 5-phosphate + NADPH + H(+). Its pathway is isoprenoid biosynthesis; isopentenyl diphosphate biosynthesis via DXP pathway; isopentenyl diphosphate from 1-deoxy-D-xylulose 5-phosphate: step 1/6. With respect to regulation, inhibited by fosmidomycin. Functionally, catalyzes the NADPH-dependent rearrangement and reduction of 1-deoxy-D-xylulose-5-phosphate (DXP) to 2-C-methyl-D-erythritol 4-phosphate (MEP). In Escherichia coli (strain K12), this protein is 1-deoxy-D-xylulose 5-phosphate reductoisomerase (dxr).